A 385-amino-acid polypeptide reads, in one-letter code: Mannitol-1-phosphate 5-dehydrogenase (385 aa).

3–14 (ALQFGAGNIGRG) serves as a coordination point for NAD(+).

It belongs to the mannitol dehydrogenase family.

The enzyme catalyses D-mannitol 1-phosphate + NAD(+) = beta-D-fructose 6-phosphate + NADH + H(+). The chain is Mannitol-1-phosphate 5-dehydrogenase (mtlD) from Buchnera aphidicola subsp. Acyrthosiphon pisum (strain APS) (Acyrthosiphon pisum symbiotic bacterium).